A 466-amino-acid chain; its full sequence is MTASQDFVVKDLSLADWGRKELDIAETEMPGLMAAREEFGKSQPLKGARISGSLHMTIQTAVLIETLQALGAEVRWASCNIFSTQDHAAAAIAATGTPVFAIKGETLEEYWTYTDQIFQWPDGEPSNMILDDGGDATMYILIGARAEAGEDVLSNPGSEEEEVLFAQIKKRMAATPGFFTRQRDAIKGVTEETTTGVNRLYQLQKKGLLPFPAINVNDSVTKSKFDNKYGCKESLVDGIRRGTDVMMAGKVAVVCGYGDVGKGSAQSLAGAGARVKVTEVDPICALQAAMDGFEVVTLDDAASTADIIVTTTGNKDVITIDHMRKFKDMAIVGNIGHFDNEIQVAALRNLKWTNVKPQVDLIEFPDGKRIILLSEGRLLNLGNATGHPSFVMSASFTNQVLGQIELFTRTDAYKNEVYVLPKHLDEKVARLHLDKLGAKLTVLSEEQAAYIGVTPQGPFKSEHYRY.

Residues threonine 57, aspartate 132, and glutamate 192 each coordinate substrate. Residue 193-195 (TTT) coordinates NAD(+). Residues lysine 222 and aspartate 226 each coordinate substrate. Residues asparagine 227, 256–261 (GYGDVG), glutamate 279, asparagine 314, 335–337 (IGH), and asparagine 380 each bind NAD(+).

Belongs to the adenosylhomocysteinase family. Requires NAD(+) as cofactor.

It is found in the cytoplasm. It carries out the reaction S-adenosyl-L-homocysteine + H2O = L-homocysteine + adenosine. It functions in the pathway amino-acid biosynthesis; L-homocysteine biosynthesis; L-homocysteine from S-adenosyl-L-homocysteine: step 1/1. May play a key role in the regulation of the intracellular concentration of adenosylhomocysteine. The chain is Adenosylhomocysteinase from Brucella anthropi (strain ATCC 49188 / DSM 6882 / CCUG 24695 / JCM 21032 / LMG 3331 / NBRC 15819 / NCTC 12168 / Alc 37) (Ochrobactrum anthropi).